A 424-amino-acid chain; its full sequence is UPF0597 protein Shewana3_2972 (424 aa).

This sequence belongs to the UPF0597 family.

The polypeptide is UPF0597 protein Shewana3_2972 (Shewanella sp. (strain ANA-3)).